Consider the following 227-residue polypeptide: Pyridoxine/pyridoxamine 5'-phosphate oxidase (227 aa).

Substrate contacts are provided by residues 23-26 and Lys-81; that span reads RREY. FMN contacts are provided by residues 76 to 81, 91 to 92, Arg-97, Lys-98, and Gln-120; these read RIVLLK and YT. Positions 138, 142, and 146 each coordinate substrate. FMN-binding positions include 155–156 and Trp-200; that span reads QS. 206–208 is a binding site for substrate; that stretch reads RLH. Arg-210 contributes to the FMN binding site.

The protein belongs to the pyridoxamine 5'-phosphate oxidase family. Homodimer. FMN serves as cofactor.

It carries out the reaction pyridoxamine 5'-phosphate + O2 + H2O = pyridoxal 5'-phosphate + H2O2 + NH4(+). The catalysed reaction is pyridoxine 5'-phosphate + O2 = pyridoxal 5'-phosphate + H2O2. It functions in the pathway cofactor metabolism; pyridoxal 5'-phosphate salvage; pyridoxal 5'-phosphate from pyridoxamine 5'-phosphate: step 1/1. The protein operates within cofactor metabolism; pyridoxal 5'-phosphate salvage; pyridoxal 5'-phosphate from pyridoxine 5'-phosphate: step 1/1. Its function is as follows. Catalyzes the oxidation of either pyridoxine 5'-phosphate (PNP) or pyridoxamine 5'-phosphate (PMP) into pyridoxal 5'-phosphate (PLP). The protein is Pyridoxine/pyridoxamine 5'-phosphate oxidase of Pectobacterium atrosepticum (strain SCRI 1043 / ATCC BAA-672) (Erwinia carotovora subsp. atroseptica).